Here is a 144-residue protein sequence, read N- to C-terminus: Macromomycin (144 aa).

The signal sequence occupies residues 1–32 (MLQNTSRFLARAGATVGVAAGLAFSLPADRDG). 2 cysteine pairs are disulfide-bonded: C68-C78 and C120-C125.

This sequence belongs to the neocarzinostatin family.

Functionally, binds non-covalently to a chromophore which is the cytotoxic and mutagenic component of the antibiotic. The chromophore binds to DNA as a weak intercalator and causes single- and double-strand breaks. The polypeptide is Macromomycin (Streptomyces macromomyceticus).